A 345-amino-acid chain; its full sequence is Phosphoribosylformylglycinamidine cyclo-ligase (345 aa).

The protein belongs to the AIR synthase family.

It is found in the cytoplasm. The catalysed reaction is 2-formamido-N(1)-(5-O-phospho-beta-D-ribosyl)acetamidine + ATP = 5-amino-1-(5-phospho-beta-D-ribosyl)imidazole + ADP + phosphate + H(+). It participates in purine metabolism; IMP biosynthesis via de novo pathway; 5-amino-1-(5-phospho-D-ribosyl)imidazole from N(2)-formyl-N(1)-(5-phospho-D-ribosyl)glycinamide: step 2/2. The protein is Phosphoribosylformylglycinamidine cyclo-ligase of Shigella dysenteriae serotype 1 (strain Sd197).